Consider the following 473-residue polypeptide: Ribulose bisphosphate carboxylase large chain 1 (473 aa).

Residues asparagine 116 and threonine 166 each contribute to the substrate site. Residue lysine 168 is the Proton acceptor of the active site. Lysine 170 is a substrate binding site. Mg(2+) is bound by residues lysine 194, aspartate 196, and glutamate 197. At lysine 194 the chain carries N6-carboxylysine. The active-site Proton acceptor is the histidine 287. Substrate is bound by residues arginine 288, histidine 320, and serine 372.

It belongs to the RuBisCO large chain family. Type I subfamily. In terms of assembly, heterohexadecamer of 8 large chains and 8 small chains. Mg(2+) serves as cofactor.

The enzyme catalyses 2 (2R)-3-phosphoglycerate + 2 H(+) = D-ribulose 1,5-bisphosphate + CO2 + H2O. The catalysed reaction is D-ribulose 1,5-bisphosphate + O2 = 2-phosphoglycolate + (2R)-3-phosphoglycerate + 2 H(+). Functionally, ruBisCO catalyzes two reactions: the carboxylation of D-ribulose 1,5-bisphosphate, the primary event in carbon dioxide fixation, as well as the oxidative fragmentation of the pentose substrate. Both reactions occur simultaneously and in competition at the same active site. This is Ribulose bisphosphate carboxylase large chain 1 from Nitrobacter winogradskyi (strain ATCC 25391 / DSM 10237 / CIP 104748 / NCIMB 11846 / Nb-255).